The sequence spans 273 residues: Ribosomal RNA small subunit methyltransferase A (273 aa).

Asn18, Leu20, Gly45, Glu66, Asp91, and Asn113 together coordinate S-adenosyl-L-methionine.

The protein belongs to the class I-like SAM-binding methyltransferase superfamily. rRNA adenine N(6)-methyltransferase family. RsmA subfamily.

It is found in the cytoplasm. The catalysed reaction is adenosine(1518)/adenosine(1519) in 16S rRNA + 4 S-adenosyl-L-methionine = N(6)-dimethyladenosine(1518)/N(6)-dimethyladenosine(1519) in 16S rRNA + 4 S-adenosyl-L-homocysteine + 4 H(+). Its function is as follows. Specifically dimethylates two adjacent adenosines (A1518 and A1519) in the loop of a conserved hairpin near the 3'-end of 16S rRNA in the 30S particle. May play a critical role in biogenesis of 30S subunits. The polypeptide is Ribosomal RNA small subunit methyltransferase A (Citrobacter koseri (strain ATCC BAA-895 / CDC 4225-83 / SGSC4696)).